The primary structure comprises 264 residues: Aminoglycoside 3'-phosphotransferase (264 aa).

The active-site Proton acceptor is the aspartate 190.

It belongs to the aminoglycoside phosphotransferase family.

The enzyme catalyses kanamycin A + ATP = kanamycin 3'-phosphate + ADP + H(+). Its function is as follows. Resistance to kanamycin and structurally-related aminoglycosides, including amikacin. This is Aminoglycoside 3'-phosphotransferase (aphA) from Enterococcus faecalis (Streptococcus faecalis).